The primary structure comprises 258 residues: Putative cysteine-rich repeat secretory protein 61 (258 aa).

The first 31 residues, 1–31 (MSSSFIPKRIALVLNLAMVAIQVFFIRSVSS), serve as a signal peptide directing secretion. 2 Gnk2-homologous domains span residues 38-140 (YLYH…PTAF) and 146-253 (DKNK…IYPF).

This sequence belongs to the cysteine-rich repeat secretory protein family.

Its subcellular location is the secreted. The sequence is that of Putative cysteine-rich repeat secretory protein 61 (CRRSP61) from Arabidopsis thaliana (Mouse-ear cress).